A 238-amino-acid polypeptide reads, in one-letter code: Deoxyribose-phosphate aldolase (238 aa).

Asp102 functions as the Proton donor/acceptor in the catalytic mechanism. Lys164 (schiff-base intermediate with acetaldehyde) is an active-site residue. Residue Lys193 is the Proton donor/acceptor of the active site.

Belongs to the DeoC/FbaB aldolase family. DeoC type 1 subfamily.

The protein resides in the cytoplasm. The enzyme catalyses 2-deoxy-D-ribose 5-phosphate = D-glyceraldehyde 3-phosphate + acetaldehyde. Its pathway is carbohydrate degradation; 2-deoxy-D-ribose 1-phosphate degradation; D-glyceraldehyde 3-phosphate and acetaldehyde from 2-deoxy-alpha-D-ribose 1-phosphate: step 2/2. Functionally, catalyzes a reversible aldol reaction between acetaldehyde and D-glyceraldehyde 3-phosphate to generate 2-deoxy-D-ribose 5-phosphate. The sequence is that of Deoxyribose-phosphate aldolase from Rhodospirillum rubrum (strain ATCC 11170 / ATH 1.1.1 / DSM 467 / LMG 4362 / NCIMB 8255 / S1).